Here is a 1583-residue protein sequence, read N- to C-terminus: Pentafunctional AROM polypeptide (1583 aa).

The segment at 1-384 is 3-dehydroquinate synthase; the sequence is MSNPTKISIL…YETRASVVAN (384 aa). Residues 44-46, 81-84, 114-116, and Asp-119 contribute to the NAD(+) site; these read DTN, EVSK, and GGV. 7-phospho-2-dehydro-3-deoxy-D-arabino-heptonate is bound at residue Arg-130. An NAD(+)-binding site is contributed by 139–140; the sequence is TT. 2 residues coordinate 7-phospho-2-dehydro-3-deoxy-D-arabino-heptonate: Asp-146 and Lys-152. Lys-161 lines the NAD(+) pocket. Asn-162 contacts 7-phospho-2-dehydro-3-deoxy-D-arabino-heptonate. Residues 179–182 and Asn-190 contribute to the NAD(+) site; that span reads FLET. Residue Glu-194 coordinates Zn(2+). Residues 194–197 and Lys-250 contribute to the 7-phospho-2-dehydro-3-deoxy-D-arabino-heptonate site; that span reads EVIK. Catalysis depends on Glu-260, which acts as the Proton acceptor; for 3-dehydroquinate synthase activity. 7-phospho-2-dehydro-3-deoxy-D-arabino-heptonate contacts are provided by residues 264–268 and His-271; that span reads RNLLN. His-271 lines the Zn(2+) pocket. Catalysis depends on His-275, which acts as the Proton acceptor; for 3-dehydroquinate synthase activity. Residues His-287 and Lys-356 each contribute to the 7-phospho-2-dehydro-3-deoxy-D-arabino-heptonate site. Zn(2+) is bound at residue His-287. The tract at residues 397-842 is EPSP synthase; the sequence is VHPGVAQSSN…WDTLRQLFKV (446 aa). The active-site For EPSP synthase activity is Cys-824. The shikimate kinase stretch occupies residues 863 to 1055; it reads NASIYIIGMR…KEKEHSFFAS (193 aa). 870–877 contacts ATP; the sequence is GMRGAGKS. Residues 1056–1276 form a 3-dehydroquinase region; the sequence is LTLPDLREAG…AAPGQLSATE (221 aa). Residue His-1179 is the Proton acceptor; for 3-dehydroquinate dehydratase activity of the active site. The active-site Schiff-base intermediate with substrate; for 3-dehydroquinate dehydratase activity is Lys-1207. Positions 1289-1583 are shikimate dehydrogenase; that stretch reads PKKFAIFGSP…SARACSSPLI (295 aa).

The protein in the N-terminal section; belongs to the sugar phosphate cyclases superfamily. Dehydroquinate synthase family. In the 2nd section; belongs to the EPSP synthase family. It in the 3rd section; belongs to the shikimate kinase family. This sequence in the 4th section; belongs to the type-I 3-dehydroquinase family. The protein in the C-terminal section; belongs to the shikimate dehydrogenase family. As to quaternary structure, homodimer. It depends on Zn(2+) as a cofactor.

The protein localises to the cytoplasm. The enzyme catalyses 7-phospho-2-dehydro-3-deoxy-D-arabino-heptonate = 3-dehydroquinate + phosphate. The catalysed reaction is 3-dehydroquinate = 3-dehydroshikimate + H2O. It carries out the reaction shikimate + NADP(+) = 3-dehydroshikimate + NADPH + H(+). It catalyses the reaction shikimate + ATP = 3-phosphoshikimate + ADP + H(+). The enzyme catalyses 3-phosphoshikimate + phosphoenolpyruvate = 5-O-(1-carboxyvinyl)-3-phosphoshikimate + phosphate. The protein operates within metabolic intermediate biosynthesis; chorismate biosynthesis; chorismate from D-erythrose 4-phosphate and phosphoenolpyruvate: step 2/7. It participates in metabolic intermediate biosynthesis; chorismate biosynthesis; chorismate from D-erythrose 4-phosphate and phosphoenolpyruvate: step 3/7. Its pathway is metabolic intermediate biosynthesis; chorismate biosynthesis; chorismate from D-erythrose 4-phosphate and phosphoenolpyruvate: step 4/7. It functions in the pathway metabolic intermediate biosynthesis; chorismate biosynthesis; chorismate from D-erythrose 4-phosphate and phosphoenolpyruvate: step 5/7. The protein operates within metabolic intermediate biosynthesis; chorismate biosynthesis; chorismate from D-erythrose 4-phosphate and phosphoenolpyruvate: step 6/7. Its function is as follows. The AROM polypeptide catalyzes 5 consecutive enzymatic reactions in prechorismate polyaromatic amino acid biosynthesis. The polypeptide is Pentafunctional AROM polypeptide (aromA) (Emericella nidulans (strain FGSC A4 / ATCC 38163 / CBS 112.46 / NRRL 194 / M139) (Aspergillus nidulans)).